A 449-amino-acid polypeptide reads, in one-letter code: UDP-N-acetylmuramoylalanine--D-glutamate ligase (449 aa).

Residue 118 to 124 (GSNGKTT) coordinates ATP.

The protein belongs to the MurCDEF family.

The protein resides in the cytoplasm. The catalysed reaction is UDP-N-acetyl-alpha-D-muramoyl-L-alanine + D-glutamate + ATP = UDP-N-acetyl-alpha-D-muramoyl-L-alanyl-D-glutamate + ADP + phosphate + H(+). It participates in cell wall biogenesis; peptidoglycan biosynthesis. Its function is as follows. Cell wall formation. Catalyzes the addition of glutamate to the nucleotide precursor UDP-N-acetylmuramoyl-L-alanine (UMA). The polypeptide is UDP-N-acetylmuramoylalanine--D-glutamate ligase (Leuconostoc mesenteroides subsp. mesenteroides (strain ATCC 8293 / DSM 20343 / BCRC 11652 / CCM 1803 / JCM 6124 / NCDO 523 / NBRC 100496 / NCIMB 8023 / NCTC 12954 / NRRL B-1118 / 37Y)).